A 507-amino-acid chain; its full sequence is Glycerol kinase (507 aa).

Residue Thr15 participates in ADP binding. Residues Thr15, Thr16, and Ser17 each contribute to the ATP site. Position 15 (Thr15) interacts with sn-glycerol 3-phosphate. Arg19 contributes to the ADP binding site. Sn-glycerol 3-phosphate is bound by residues Arg85, Glu86, Tyr137, and Asp250. Residues Arg85, Glu86, Tyr137, Asp250, and Gln251 each contribute to the glycerol site. ADP is bound by residues Thr272 and Gly316. Thr272, Gly316, Gln320, and Gly417 together coordinate ATP. Residue Gly417 coordinates ADP.

Belongs to the FGGY kinase family.

The enzyme catalyses glycerol + ATP = sn-glycerol 3-phosphate + ADP + H(+). It participates in polyol metabolism; glycerol degradation via glycerol kinase pathway; sn-glycerol 3-phosphate from glycerol: step 1/1. Inhibited by fructose 1,6-bisphosphate (FBP). In terms of biological role, key enzyme in the regulation of glycerol uptake and metabolism. Catalyzes the phosphorylation of glycerol to yield sn-glycerol 3-phosphate. The chain is Glycerol kinase from Mycoplasmopsis pulmonis (strain UAB CTIP) (Mycoplasma pulmonis).